The sequence spans 676 residues: Potassium-transporting ATPase ATP-binding subunit (676 aa).

4 consecutive transmembrane segments (helical) span residues 24-44 (NPVM…CFYP), 45-65 (MGIP…TLLF), 212-232 (IFLI…VPFT), and 246-266 (SLVI…GALI). The active-site 4-aspartylphosphate intermediate is Asp-302. Residues Asp-339, Glu-343, 372–379 (FSAKTRMS), and Lys-390 each bind ATP. The Mg(2+) site is built by Asp-513 and Asp-517. The next 3 helical transmembrane spans lie at 573–593 (FSIA…FYSI), 611–631 (AILS…PLAL), and 656–676 (GIIA…LIIL).

It belongs to the cation transport ATPase (P-type) (TC 3.A.3) family. Type IA subfamily. In terms of assembly, the system is composed of three essential subunits: KdpA, KdpB and KdpC.

It is found in the cell membrane. The enzyme catalyses K(+)(out) + ATP + H2O = K(+)(in) + ADP + phosphate + H(+). Functionally, part of the high-affinity ATP-driven potassium transport (or Kdp) system, which catalyzes the hydrolysis of ATP coupled with the electrogenic transport of potassium into the cytoplasm. This subunit is responsible for energy coupling to the transport system and for the release of the potassium ions to the cytoplasm. In Enterococcus faecalis (strain ATCC 700802 / V583), this protein is Potassium-transporting ATPase ATP-binding subunit.